Here is a 91-residue protein sequence, read N- to C-terminus: MELDKIRNLSDEELKVEDNKAQEQLFRLRFQMKMGQTEGVKKLRELKKDVARIRTISRERVLAIRGAAPLAESSAPAKTKSRARKSKKEAL.

The tract at residues 67–91 (AAPLAESSAPAKTKSRARKSKKEAL) is disordered. Residues 79-91 (TKSRARKSKKEAL) are compositionally biased toward basic residues.

Belongs to the universal ribosomal protein uL29 family.

This Acidobacterium capsulatum (strain ATCC 51196 / DSM 11244 / BCRC 80197 / JCM 7670 / NBRC 15755 / NCIMB 13165 / 161) protein is Large ribosomal subunit protein uL29.